Reading from the N-terminus, the 446-residue chain is BAG family molecular chaperone regulator 7 (446 aa).

The segment at 230 to 252 is disordered; that stretch reads TGGEKKKKHEEKEKKEKIETKSK. Residues 239 to 250 show a composition bias toward basic and acidic residues; it reads EEKEKKEKIETK. An IQ domain is found at 303–332; that stretch reads PEYAAVMIQRAFKAYLIRRSKSLRALRDLA. Positions 330-407 constitute a BAG domain; that stretch reads DLAIAKTKLK…AMLDVVDPQP (78 aa). Residue T443 is modified to Phosphothreonine.

As to quaternary structure, binds to the ATPase domain of HSP70/HSC70 chaperones. Interacts with HSP70-11/BIP2.

The protein localises to the endoplasmic reticulum. Its function is as follows. Co-chaperone that regulates diverse cellular pathways, such as programmed cell death and stress responses. Necessary for the proper maintenance of the unfolded protein response (UPR) during heat and cold tolerance. The sequence is that of BAG family molecular chaperone regulator 7 (BAG7) from Arabidopsis thaliana (Mouse-ear cress).